Here is a 371-residue protein sequence, read N- to C-terminus: Glutamate 5-kinase (371 aa).

Residue lysine 8 coordinates ATP. Substrate-binding residues include serine 49, aspartate 136, and asparagine 149. ATP-binding positions include 169-170 (TD) and 213-219 (TGGMATK). One can recognise a PUA domain in the interval 278–356 (TGKLILDDGA…EDIPQVLGYA (79 aa)).

It belongs to the glutamate 5-kinase family.

The protein resides in the cytoplasm. It catalyses the reaction L-glutamate + ATP = L-glutamyl 5-phosphate + ADP. It functions in the pathway amino-acid biosynthesis; L-proline biosynthesis; L-glutamate 5-semialdehyde from L-glutamate: step 1/2. Functionally, catalyzes the transfer of a phosphate group to glutamate to form L-glutamate 5-phosphate. The polypeptide is Glutamate 5-kinase (Acaryochloris marina (strain MBIC 11017)).